Here is a 288-residue protein sequence, read N- to C-terminus: Aquaporin PIP 1-3 (288 aa).

Positions M1 to E30 are disordered. 2 consecutive transmembrane segments (helical) span residues I57 to V77 and I92 to H114. The short motif at N116–A118 is the NPA 1 element. 3 helical membrane-spanning segments follow: residues V135–F155, G177–A197, and I211–I231. The NPA 2 motif lies at N237–A239. Residues I259–I279 form a helical membrane-spanning segment.

This sequence belongs to the MIP/aquaporin (TC 1.A.8) family. PIP (TC 1.A.8.11) subfamily. Expressed in roots and leaves.

It localises to the cell membrane. Functionally, water channel required to facilitate the transport of water across cell membrane. Increases the capacity for root water uptake under water deficit. May play a role in drought avoidance in upland rice. The polypeptide is Aquaporin PIP 1-3 (PIP1-3) (Oryza sativa subsp. japonica (Rice)).